The sequence spans 453 residues: Bifunctional protein GlmU (453 aa).

The segment at 1–225 is pyrophosphorylase; sequence MNIVILAAGT…EWETLGVNSK (225 aa). Residues 6–9, K20, Q71, 76–77, 98–100, G135, E150, N165, and N223 contribute to the UDP-N-acetyl-alpha-D-glucosamine site; these read LAAG, GT, and YGD. D100 contributes to the Mg(2+) binding site. Mg(2+) is bound at residue N223. The segment at 226–246 is linker; that stretch reads QQLAELERIHQRNVADALLVA. The N-acetyltransferase stretch occupies residues 247-453; it reads GVTLADPARL…GYVRPTKKKS (207 aa). UDP-N-acetyl-alpha-D-glucosamine-binding residues include R329 and K347. H359 functions as the Proton acceptor in the catalytic mechanism. The UDP-N-acetyl-alpha-D-glucosamine site is built by Y362 and N373. Residues A376, 382-383, S401, and A419 contribute to the acetyl-CoA site; that span reads NY.

In the N-terminal section; belongs to the N-acetylglucosamine-1-phosphate uridyltransferase family. This sequence in the C-terminal section; belongs to the transferase hexapeptide repeat family. Homotrimer. Mg(2+) serves as cofactor.

The protein localises to the cytoplasm. It catalyses the reaction alpha-D-glucosamine 1-phosphate + acetyl-CoA = N-acetyl-alpha-D-glucosamine 1-phosphate + CoA + H(+). The catalysed reaction is N-acetyl-alpha-D-glucosamine 1-phosphate + UTP + H(+) = UDP-N-acetyl-alpha-D-glucosamine + diphosphate. The protein operates within nucleotide-sugar biosynthesis; UDP-N-acetyl-alpha-D-glucosamine biosynthesis; N-acetyl-alpha-D-glucosamine 1-phosphate from alpha-D-glucosamine 6-phosphate (route II): step 2/2. Its pathway is nucleotide-sugar biosynthesis; UDP-N-acetyl-alpha-D-glucosamine biosynthesis; UDP-N-acetyl-alpha-D-glucosamine from N-acetyl-alpha-D-glucosamine 1-phosphate: step 1/1. It participates in bacterial outer membrane biogenesis; LPS lipid A biosynthesis. Its function is as follows. Catalyzes the last two sequential reactions in the de novo biosynthetic pathway for UDP-N-acetylglucosamine (UDP-GlcNAc). The C-terminal domain catalyzes the transfer of acetyl group from acetyl coenzyme A to glucosamine-1-phosphate (GlcN-1-P) to produce N-acetylglucosamine-1-phosphate (GlcNAc-1-P), which is converted into UDP-GlcNAc by the transfer of uridine 5-monophosphate (from uridine 5-triphosphate), a reaction catalyzed by the N-terminal domain. The chain is Bifunctional protein GlmU from Paraburkholderia xenovorans (strain LB400).